Reading from the N-terminus, the 186-residue chain is Ribosome-recycling factor (186 aa).

It belongs to the RRF family.

Its subcellular location is the cytoplasm. In terms of biological role, responsible for the release of ribosomes from messenger RNA at the termination of protein biosynthesis. May increase the efficiency of translation by recycling ribosomes from one round of translation to another. The polypeptide is Ribosome-recycling factor (Amoebophilus asiaticus (strain 5a2)).